The chain runs to 375 residues: Erythronate-4-phosphate dehydrogenase (375 aa).

2 residues coordinate substrate: S45 and T66. Residues D146 and T175 each contribute to the NAD(+) site. R208 is a catalytic residue. D232 lines the NAD(+) pocket. E237 is an active-site residue. The active-site Proton donor is the H254. Residue G257 participates in NAD(+) binding. Substrate is bound at residue Y258.

The protein belongs to the D-isomer specific 2-hydroxyacid dehydrogenase family. PdxB subfamily. As to quaternary structure, homodimer.

The protein resides in the cytoplasm. The enzyme catalyses 4-phospho-D-erythronate + NAD(+) = (R)-3-hydroxy-2-oxo-4-phosphooxybutanoate + NADH + H(+). The protein operates within cofactor biosynthesis; pyridoxine 5'-phosphate biosynthesis; pyridoxine 5'-phosphate from D-erythrose 4-phosphate: step 2/5. Its function is as follows. Catalyzes the oxidation of erythronate-4-phosphate to 3-hydroxy-2-oxo-4-phosphonooxybutanoate. The sequence is that of Erythronate-4-phosphate dehydrogenase from Yersinia pseudotuberculosis serotype O:1b (strain IP 31758).